Reading from the N-terminus, the 245-residue chain is Thiopurine S-methyltransferase (245 aa).

29–40 (WREKWVDGKIGF) lines the S-adenosyl-L-methionine pocket. Phe-40 serves as a coordination point for substrate. Lys-58 carries the post-translational modification N6-acetyllysine. Positions 69, 90, and 152 each coordinate S-adenosyl-L-methionine.

The protein belongs to the class I-like SAM-binding methyltransferase superfamily. TPMT family. As to quaternary structure, monomer.

It is found in the cytoplasm. The catalysed reaction is S-adenosyl-L-methionine + a thiopurine = S-adenosyl-L-homocysteine + a thiopurine S-methylether.. This is Thiopurine S-methyltransferase (TPMT) from Panthera pardus (Leopard).